The following is a 158-amino-acid chain: MLNQLDNLTERVRGSNKLVDRWLHVRKHLLVAYYNLGGIKPGKESYMRLNEKALDDFCQSLVDYLSAGHFSIYERILHKLESNGQLARAAKIWPQLEANTQQIMDYYDSSLETAIDHDNYLEFQQVLSDIGEALEARFVLEDKLILLVLDAARVKHPA.

The protein belongs to the Rsd/AlgQ family. Interacts with RpoD.

Its subcellular location is the cytoplasm. Functionally, binds RpoD and negatively regulates RpoD-mediated transcription activation by preventing the interaction between the primary sigma factor RpoD with the catalytic core of the RNA polymerase and with promoter DNA. May be involved in replacement of the RNA polymerase sigma subunit from RpoD to RpoS during the transition from exponential growth to the stationary phase. The polypeptide is Regulator of sigma D (Shigella dysenteriae serotype 1 (strain Sd197)).